A 109-amino-acid chain; its full sequence is Tektin-3 (109 aa).

Belongs to the tektin family. As to quaternary structure, microtubule inner protein component of sperm flagellar doublet microtubules. Interacts with TEKT1, TEKT2, TEKT4 and TEKT5. Interacts with CCDC38. Post-translationally, N- and O-glycosylated. May be proteolytically processed during the epididymal transit of spermatozoa. In terms of processing, ubiquitinated, leading to its degradation. Deubiquitinated by USP16, promoting its stability.

It localises to the cytoplasm. It is found in the cytoskeleton. The protein resides in the cilium axoneme. Its subcellular location is the flagellum axoneme. The protein localises to the cytoplasmic vesicle. It localises to the secretory vesicle. It is found in the acrosome outer membrane. Functionally, microtubule inner protein (MIP) part of the dynein-decorated doublet microtubules (DMTs) in cilia and flagellar axoneme. Forms filamentous polymers in the walls of ciliary and flagellar microtubules. Required for normal sperm mobility. The protein is Tektin-3 of Mesocricetus auratus (Golden hamster).